The primary structure comprises 331 residues: UDP-N-acetylenolpyruvoylglucosamine reductase (331 aa).

The FAD-binding PCMH-type domain maps to Arg-54–Gly-221. The active site involves Arg-200. The active-site Proton donor is Ser-251. Glu-321 is an active-site residue.

It belongs to the MurB family. It depends on FAD as a cofactor.

It is found in the cytoplasm. The catalysed reaction is UDP-N-acetyl-alpha-D-muramate + NADP(+) = UDP-N-acetyl-3-O-(1-carboxyvinyl)-alpha-D-glucosamine + NADPH + H(+). It participates in cell wall biogenesis; peptidoglycan biosynthesis. Its function is as follows. Cell wall formation. This is UDP-N-acetylenolpyruvoylglucosamine reductase from Trichormus variabilis (strain ATCC 29413 / PCC 7937) (Anabaena variabilis).